A 160-amino-acid chain; its full sequence is UPF0262 protein Oant_0325 (160 aa).

This sequence belongs to the UPF0262 family.

This is UPF0262 protein Oant_0325 from Brucella anthropi (strain ATCC 49188 / DSM 6882 / CCUG 24695 / JCM 21032 / LMG 3331 / NBRC 15819 / NCTC 12168 / Alc 37) (Ochrobactrum anthropi).